An 832-amino-acid chain; its full sequence is Mechanosensitive cation channel TMEM63B (832 aa).

At 1-40 (MLPFLLATLGTTALNNSNPKDYCYSARIRSTVLQGLPFGG) the chain is on the extracellular side. The chain crosses the membrane as a helical span at residues 41-65 (VPTVLALDFMCFLALLFLFSILRKV). Residue Cys51 is the site of S-palmitoyl cysteine attachment. The Cytoplasmic portion of the chain corresponds to 66-145 (AWDYGRLALV…KDDEIRDKCG (80 aa)). The Mediates endoplasmic reticulum retention motif lies at 86–88 (RDR). Phosphoserine is present on residues Ser111, Ser113, Ser114, and Ser115. Residue Cys126 is the site of S-palmitoyl cysteine attachment. Residues 146 to 178 (GDAVHYLSFQRHIIGLLVVVGVLSVGIVLPVNF) traverse the membrane as a helical segment. Over 179–202 (SGDLLENNAYSFGRTTIANLKSGN) the chain is Extracellular. A helical membrane pass occupies residues 203–227 (NLLWLHTSFAFLYLLLTVYSMRRHT). Over 228-427 (SKMRYKEDDL…IYWEHLSIRG (200 aa)) the chain is Cytoplasmic. The tract at residues 231–426 (RYKEDDLVKR…NIYWEHLSIR (196 aa)) is intracellular linker IL2; confers mechanosensitivity. Residues Cys382 and Cys398 are each lipidated (S-palmitoyl cysteine). The chain crosses the membrane as a helical span at residues 428 to 457 (FIWWLRCLVINVVLFILLFFLTTPAIIITT). Topologically, residues 458–472 (MDKFNVTKPVEYLNN) are extracellular. N-linked (GlcNAc...) asparagine glycosylation is present at Asn462. Residues 473–502 (PIITQFFPTLLLWCFSALLPTIVYYSAFFE) form a helical membrane-spanning segment. Residues 503–506 (AHWT) lie on the Cytoplasmic side of the membrane. Residues 507–543 (RSGENRTTMHKCYTFLIFMVLLLPSLGLSSLDLFFRW) traverse the membrane as a helical segment. The Extracellular portion of the chain corresponds to 544-566 (LFDKKFLAEAAIRFECVFLPDNG). A helical transmembrane segment spans residues 567–599 (AFFVNYVIASAFIGNAMDLLRIPGLLMYMIRLC). Residues 567-599 (AFFVNYVIASAFIGNAMDLLRIPGLLMYMIRLC) are gating helix. Topologically, residues 600–619 (LARSAAERRNVKRHQAYEFQ) are cytoplasmic. Residues 620-638 (FGAAYAWMMCVFTVVMTYS) form a helical membrane-spanning segment. Over 639 to 641 (ITC) the chain is Extracellular. The chain crosses the membrane as a helical span at residues 642-666 (PIIVPFGLMYMLLKHLVDRYNLYYA). The Cytoplasmic portion of the chain corresponds to 667–673 (YLPAKLD). The helical transmembrane segment at 674–702 (KKIHSGAVNQVVAAPILCLFWLLFFSTMR) threads the bilayer. Topologically, residues 703–707 (TGFLA) are extracellular. A helical transmembrane segment spans residues 708–728 (PTSMFTFVVLVITIVICLCHV). S-palmitoyl cysteine attachment occurs at residues Cys726 and Cys729. Topologically, residues 729-832 (CFGHFKYLSA…DSLIENEIHQ (104 aa)) are cytoplasmic. Residues 780–814 (EVDGDGDGAPGSSGDEPPSSSSQDEELLMPPDALT) form a disordered region. Residues 789 to 801 (PGSSGDEPPSSSS) show a composition bias toward low complexity.

The protein belongs to the CSC1 (TC 1.A.17) family. As to quaternary structure, monomer. Interacts with SLC19A2; interaction is required for the phospholipid scramblase activity. Post-translationally, palmitoylation is required for localization to the plasma membrane and stability. In terms of processing, N-Glycosylated.

It localises to the cell membrane. Its subcellular location is the endoplasmic reticulum membrane. It is found in the lysosome membrane. The protein resides in the early endosome membrane. The enzyme catalyses Ca(2+)(in) = Ca(2+)(out). The catalysed reaction is Mg(2+)(in) = Mg(2+)(out). It carries out the reaction K(+)(in) = K(+)(out). It catalyses the reaction Na(+)(in) = Na(+)(out). The enzyme catalyses Cs(+)(in) = Cs(+)(out). The catalysed reaction is a 1,2-diacyl-sn-glycero-3-phosphocholine(in) = a 1,2-diacyl-sn-glycero-3-phosphocholine(out). It carries out the reaction a sphingomyelin(in) = a sphingomyelin(out). In terms of biological role, mechanosensitive cation channel with low conductance and high activation threshold. Osmosensitive cation channel preferentially activated by hypotonic stress. Also acts as a phospholipid scramblase in response to changes in membrane structure: upon changes in membrane curvature and thickness, alters its conformation and translocates phospholipids, such as phosphatidylcholine and sphingomyelin, thereby controlling plasma membrane lipid distribution. Forms a heterodimer with SLC19A2, which mediates phospholipid scramblase activity following Ca(2+) stimulation. Expressed in excitatory neurons of the subfornical organ and functions as a thirst receptor that mediates neuronal response to hyperosmolality to drive thirst and drinking behavior. Facilitates intestinal motility by promoting proliferation of intestinal stem cells. Essential for the baby's first breath and respiration throughout life. Upon lung inflation conducts cation currents in alveolar type 1 and 2 cells triggering lamellar body exocytosis and surfactant secretion into airspace. Acts as an osmosensor in cochlear outer hair cells (OHCs) where it mediates calcium influx and regulatory volume decrease response. Required for the maintenance of OHC morphology, OHC survival and normal hearing. In Homo sapiens (Human), this protein is Mechanosensitive cation channel TMEM63B.